A 358-amino-acid polypeptide reads, in one-letter code: Peptide chain release factor 1 (358 aa).

Q237 is subject to N5-methylglutamine.

Belongs to the prokaryotic/mitochondrial release factor family. In terms of processing, methylated by PrmC. Methylation increases the termination efficiency of RF1.

The protein resides in the cytoplasm. Functionally, peptide chain release factor 1 directs the termination of translation in response to the peptide chain termination codons UAG and UAA. The sequence is that of Peptide chain release factor 1 from Streptomyces avermitilis (strain ATCC 31267 / DSM 46492 / JCM 5070 / NBRC 14893 / NCIMB 12804 / NRRL 8165 / MA-4680).